The primary structure comprises 50 residues: Cytochrome c oxidase subunit 4 (50 aa).

Topologically, residues 2 to 17 (ASHHEITDHKHGEMDI) are cytoplasmic. Residues 18-49 (RHQQATFAGFIKGATWVSILSIAVLVFLALAN) form a helical membrane-spanning segment. A topological domain (periplasmic) is located at residue serine 50.

The protein resides in the cell inner membrane. The enzyme catalyses 4 Fe(II)-[cytochrome c] + O2 + 8 H(+)(in) = 4 Fe(III)-[cytochrome c] + 2 H2O + 4 H(+)(out). Its function is as follows. Not required for enzymatic activity or proton pumping of the cytochrome c oxidase complex. The sequence is that of Cytochrome c oxidase subunit 4 (ctaH) from Paracoccus denitrificans.